A 407-amino-acid chain; its full sequence is Cytochrome P450 NovI (407 aa).

Cys357 is a heme binding site.

The protein belongs to the cytochrome P450 family. Heme is required as a cofactor.

It functions in the pathway antibiotic biosynthesis; novobiocin biosynthesis. Together with NovH, involved in the formation of a beta-OH-Tyr intermediate in the novobiocin biosynthesis pathway, an aminocoumarin family antibiotic that targets bacterial DNA gyrases. Acts as a cytochrome P450-type monooxygenase with specificity for the tyrosyl-S-NovH acyl enzyme (L-Tyr-S-NovH) to form the beta-OH-Tyr intermediate (L-beta-OH-Tyr-S-NovH). This chain is Cytochrome P450 NovI (novI), found in Streptomyces niveus (Streptomyces spheroides).